The primary structure comprises 320 residues: Fe-S cluster assembly protein dre2 (320 aa).

The N-terminal SAM-like domain stretch occupies residues 1–130 (MAKQTLLLSP…KPDIEEMQAV (130 aa)). The tract at residues 131 to 213 (PLRLGRKNDH…DNLLDDSELS (83 aa)) is linker. The tract at residues 141–166 (LAGAPSLEGSAAEHPFPPEVSEGKTA) is disordered. 4 residues coordinate [2Fe-2S] cluster: C222, C233, C236, and C238. The tract at residues 222–238 (CRPKAGKRRRACKDCTC) is fe-S binding site A. [4Fe-4S] cluster is bound by residues C283, C286, C294, and C297. 2 short sequence motifs (cx2C motif) span residues 283–286 (CGNC) and 294–297 (CEGC). The interval 283–297 (CGNCSLGDAFRCEGC) is fe-S binding site B.

This sequence belongs to the anamorsin family. In terms of assembly, monomer. Interacts with tah18. Interacts with mia40. [2Fe-2S] cluster serves as cofactor. It depends on [4Fe-4S] cluster as a cofactor.

The protein resides in the cytoplasm. The protein localises to the mitochondrion intermembrane space. In terms of biological role, component of the cytosolic iron-sulfur (Fe-S) protein assembly (CIA) machinery required for the maturation of extramitochondrial Fe-S proteins. Part of an electron transfer chain functioning in an early step of cytosolic Fe-S biogenesis, facilitating the de novo assembly of a [4Fe-4S] cluster on the scaffold complex cfd1-nbp35. Electrons are transferred to dre2 from NADPH via the FAD- and FMN-containing protein tah18. Tah18-dre2 are also required for the assembly of the diferric tyrosyl radical cofactor of ribonucleotide reductase (RNR), probably by providing electrons for reduction during radical cofactor maturation in the catalytic small subunit rnr2. This Neosartorya fischeri (strain ATCC 1020 / DSM 3700 / CBS 544.65 / FGSC A1164 / JCM 1740 / NRRL 181 / WB 181) (Aspergillus fischerianus) protein is Fe-S cluster assembly protein dre2.